A 349-amino-acid chain; its full sequence is Fe(3+) ions import ATP-binding protein FbpC (349 aa).

One can recognise an ABC transporter domain in the interval 4–236; it reads LELHHIGKSY…PVDEPTATFL (233 aa). 36–43 serves as a coordination point for ATP; that stretch reads GPSGSGKT.

It belongs to the ABC transporter superfamily. Fe(3+) ion importer (TC 3.A.1.10) family. The complex is composed of two ATP-binding proteins (FbpC), two transmembrane proteins (FbpB) and a solute-binding protein (FbpA).

It is found in the cell inner membrane. The enzyme catalyses Fe(3+)(out) + ATP + H2O = Fe(3+)(in) + ADP + phosphate + H(+). In terms of biological role, part of the ABC transporter complex FbpABC involved in Fe(3+) ions import. Responsible for energy coupling to the transport system. The chain is Fe(3+) ions import ATP-binding protein FbpC from Yersinia pseudotuberculosis serotype I (strain IP32953).